The sequence spans 157 residues: Small ribosomal subunit protein uS7 (157 aa).

This sequence belongs to the universal ribosomal protein uS7 family. Part of the 30S ribosomal subunit. Contacts proteins S9 and S11.

Functionally, one of the primary rRNA binding proteins, it binds directly to 16S rRNA where it nucleates assembly of the head domain of the 30S subunit. Is located at the subunit interface close to the decoding center, probably blocks exit of the E-site tRNA. In Francisella tularensis subsp. tularensis (strain FSC 198), this protein is Small ribosomal subunit protein uS7.